Reading from the N-terminus, the 68-residue chain is Small ribosomal subunit protein bS21 (68 aa).

The protein belongs to the bacterial ribosomal protein bS21 family.

This chain is Small ribosomal subunit protein bS21, found in Paracoccus denitrificans (strain Pd 1222).